Consider the following 769-residue polypeptide: Glutathione biosynthesis bifunctional protein GshAB (769 aa).

Residues 1 to 347 (MLDSFKENEA…QLADENENNI (347 aa)) form a glutamate--cysteine ligase region. Residues 514-768 (KLVLAEHGIR…IGDKILDFLF (255 aa)) enclose the ATP-grasp domain. 541–599 (SLFEDKQIVVKPKSTNYGWGISIFKNKFTLEDYQEALNIAFSYDSSVIIEEFIPGDEFR) provides a ligand contact to ATP. The Mg(2+) site is built by D721, E738, and N740. D721, E738, and N740 together coordinate Mn(2+).

It in the N-terminal section; belongs to the glutamate--cysteine ligase type 1 family. Type 2 subfamily. Monomer. Mg(2+) is required as a cofactor. Requires Mn(2+) as cofactor.

The catalysed reaction is L-cysteine + L-glutamate + ATP = gamma-L-glutamyl-L-cysteine + ADP + phosphate + H(+). The enzyme catalyses gamma-L-glutamyl-L-cysteine + glycine + ATP = glutathione + ADP + phosphate + H(+). The protein operates within sulfur metabolism; glutathione biosynthesis; glutathione from L-cysteine and L-glutamate: step 1/2. Its pathway is sulfur metabolism; glutathione biosynthesis; glutathione from L-cysteine and L-glutamate: step 2/2. Functionally, synthesizes glutathione from L-glutamate and L-cysteine via gamma-L-glutamyl-L-cysteine. This is Glutathione biosynthesis bifunctional protein GshAB from Listeria innocua serovar 6a (strain ATCC BAA-680 / CLIP 11262).